We begin with the raw amino-acid sequence, 312 residues long: Polyamine aminopropyltransferase (312 aa).

The PABS domain occupies 7–247 (FFWVQEYFTP…GPLGFALAAQ (241 aa)). Glutamine 36 is an S-methyl-5'-thioadenosine binding site. Residues histidine 67 and glutamate 95 each coordinate spermidine. S-methyl-5'-thioadenosine contacts are provided by residues aspartate 115 and 147 to 148 (DA). The Proton acceptor role is filled by aspartate 165. Position 174 (proline 174) interacts with S-methyl-5'-thioadenosine.

It belongs to the spermidine/spermine synthase family. As to quaternary structure, homodimer or homotetramer.

The protein localises to the cytoplasm. The catalysed reaction is S-adenosyl 3-(methylsulfanyl)propylamine + putrescine = S-methyl-5'-thioadenosine + spermidine + H(+). It functions in the pathway amine and polyamine biosynthesis; spermidine biosynthesis; spermidine from putrescine: step 1/1. Catalyzes the irreversible transfer of a propylamine group from the amino donor S-adenosylmethioninamine (decarboxy-AdoMet) to putrescine (1,4-diaminobutane) to yield spermidine. This Synechococcus sp. (strain JA-2-3B'a(2-13)) (Cyanobacteria bacterium Yellowstone B-Prime) protein is Polyamine aminopropyltransferase.